Reading from the N-terminus, the 348-residue chain is MDMANLTWLHGQPQSTGVLKANPEDFVVVEDLGFEPDGEGEHVLVNIRKNGCNTQFVADYLARFAGIHARSVSYAGLKDRHAVTEQWFCLHLPGKETPDFTQFSLEGCEVLASARHLRKMRIGTLKGNAFTLVLRHISDRQDVEPRLQAIATGGVPNYFGSQRFGRGGNNLVMARRWANDEIRVKERSKRSFYLSASRSALFNLIASRRLANQQQHTVLEGDALQLSGRGSWFVAKPEELEALQQRLDAGELMITAPLPGDGEPGTAGEALSFEQQCLLEQPELMALLKRERVDPARRALLLQPKNMHWEWWDDATVELRFWLPAGSFATSVVREIMRQDSSDADISE.

Phe26 is a substrate binding site. Asp79 functions as the Nucleophile in the catalytic mechanism. Substrate is bound at residue Asn128. Positions 154–302 constitute a TRUD domain; the sequence is GVPNYFGSQR…VDPARRALLL (149 aa). Phe328 contacts substrate.

It belongs to the pseudouridine synthase TruD family.

It carries out the reaction uridine(13) in tRNA = pseudouridine(13) in tRNA. In terms of biological role, responsible for synthesis of pseudouridine from uracil-13 in transfer RNAs. This is tRNA pseudouridine synthase D from Serratia proteamaculans (strain 568).